The sequence spans 467 residues: UDP-glycosyltransferase 71D2 (467 aa).

UDP-alpha-D-glucose contacts are provided by residues Ser-283, 339–341 (SPQ), 356–364 (HCGWNSIVE), and 378–381 (YAEQ).

The protein belongs to the UDP-glycosyltransferase family.

The chain is UDP-glycosyltransferase 71D2 (UGT71D2) from Arabidopsis thaliana (Mouse-ear cress).